Reading from the N-terminus, the 228-residue chain is Delta-type opioid receptor (228 aa).

Residues 1–3 traverse the membrane as a helical segment; that stretch reads GIV. Residues 4–13 lie on the Cytoplasmic side of the membrane; sequence RYTKMKTATN. A helical membrane pass occupies residues 14 to 38; sequence IYIFNLALADALATSTLPFQSAKYL. Over 39-50 the chain is Extracellular; that stretch reads METWPFGELLCK. Cysteine 49 and cysteine 126 are oxidised to a cystine. Residues 51 to 72 form a helical membrane-spanning segment; sequence AVLSIDYYNMFTSIFTLTMMSV. Over 73-91 the chain is Cytoplasmic; sequence DRYIAVCHPVKALDFRTPA. A helical membrane pass occupies residues 92–114; it reads KAKLINICIWVLASGVGVPIMVM. The Extracellular portion of the chain corresponds to 115–134; it reads AVTRPRDGAVVCMLQFPSPS. The chain crosses the membrane as a helical span at residues 135–166; it reads WYWDTVTKICVFLFAFVVPILVITVCYGLMLL. At 167-189 the chain is on the cytoplasmic side; sequence RLRSVRLLSGSKEKDRSLRRITR. Residues 190-212 traverse the membrane as a helical segment; that stretch reads MVLVVVGAFVVCWAPIHIFVIVW. Residues 213 to 227 lie on the Extracellular side of the membrane; the sequence is TLVDIDRRDPLVVAA.

The protein belongs to the G-protein coupled receptor 1 family. As to quaternary structure, may form homooligomers. Forms a heterodimer with OPRM1. Interacts with GPRASP1. Interacts with RTP4; the interaction promotes cell surface localization of the OPRD1-OPRM1 heterodimer. Post-translationally, ubiquitinated. A basal ubiquitination seems not to be related to degradation. Ubiquitination is increased upon formation of OPRM1:OPRD1 oligomers leading to proteasomal degradation; the ubiquitination is diminished by RTP4. In terms of tissue distribution, detected in myenteric plexus and smooth muscle (at protein level). Detected in brain and intestine.

It localises to the cell membrane. In terms of biological role, G-protein coupled receptor that functions as a receptor for endogenous enkephalins and for a subset of other opioids. Ligand binding causes a conformation change that triggers signaling via guanine nucleotide-binding proteins (G proteins) and modulates the activity of down-stream effectors, such as adenylate cyclase. Signaling leads to the inhibition of adenylate cyclase activity. Inhibits neurotransmitter release by reducing calcium ion currents and increasing potassium ion conductance. Plays a role in the perception of pain and in opiate-mediated analgesia. Plays a role in developing analgesic tolerance to morphine. In Sus scrofa (Pig), this protein is Delta-type opioid receptor (OPRD1).